Consider the following 408-residue polypeptide: MLQSIPGPQHILKALTGSLGLSTIFEPDHEASQNSFQCSKPELSCHAQYHGQDTCCFNYPGGQMLQTQFWDADPAVGPVDSWTIHGLWPDFCDGGFDQYCDSKRRYSNISLILVDSGRADLLEYMSDFWKDFRGDDEDLWEHEWNKHGTCISTLETTCYADYYPQQEVVDYFNKTVEIFQKLPTYQTLANAGIVPSHTETYTLDEIQAALAKAHAAPVTIRCRNRALNEVWYHFNIAGSLQTGTFVPSEPDGLKTNCPATGIHYIPKKHREPSRTTDTPSQPTTTGTPFKGRGNLIVSSMGGRRGCIISRGKWFASGTCATFKAKKATDDTFTLQSSKGICAFEGDAFSCGPHVTAPEEFSVQDGKLSYRGNTTFFADKAPKGRTQSTIFASQDEHLIDLAITWKERR.

The N-terminal stretch at 1–25 (MLQSIPGPQHILKALTGSLGLSTIF) is a signal peptide. 4 disulfide bridges follow: Cys38/Cys56, Cys45/Cys92, Cys55/Cys158, and Cys100/Cys150. His85 is an active-site residue. The N-linked (GlcNAc...) asparagine glycan is linked to Asn108. Catalysis depends on residues Glu143 and His147. An N-linked (GlcNAc...) asparagine glycan is attached at Asn173. Cysteines 222 and 257 form a disulfide. Residues 268–292 (KHREPSRTTDTPSQPTTTGTPFKGR) are disordered. Over residues 275–288 (TTDTPSQPTTTGTP) the composition is skewed to low complexity. An N-linked (GlcNAc...) asparagine glycan is attached at Asn372.

The protein belongs to the RNase T2 family.

The protein resides in the vacuole lumen. It localises to the cytoplasm. It catalyses the reaction a ribonucleotidyl-ribonucleotide-RNA + H2O = a 3'-end 3'-phospho-ribonucleotide-RNA + a 5'-end dephospho-ribonucleoside-RNA + H(+). Rnase which modulates cell survival under stress conditions. Released from the vacuole to the cytoplasm during stress to promote tRNA and rRNA cleavage and to activate separately a downstream pathway that promotes cell death. Involved in cell size, vacuolar morphology and growth at high temperatures and high salt concentration. This Aspergillus fumigatus (strain ATCC MYA-4609 / CBS 101355 / FGSC A1100 / Af293) (Neosartorya fumigata) protein is Ribonuclease T2-like (rny1).